A 126-amino-acid chain; its full sequence is MTFLRPILALLAATALVTTSAQVDGGYSKKEVTPEDMELLQKAQSNVSAYNSDVTSRICYLKVDSLETQVVSGENYKFHVSGCSVNSDNELGGCANQNCESSKYDIVIYSQSWTNTLEVTSITPVK.

Residues 1–21 (MTFLRPILALLAATALVTTSA) form the signal peptide. Residue N46 is glycosylated (N-linked (GlcNAc...) asparagine). The Secondary area of contact signature appears at 69-73 (QVVSG).

Belongs to the cystatin family. Interacts with the host papain-like cysteine protease RCR3. Interacts with the host papain-like cysteine protease C14.

It localises to the secreted. Its function is as follows. Secreted effector that interacts with and inhibits the pathogenesis-related papain-like cysteine proteases C14 and RCR3 of host plants. Inhibition of host proteases by a pathogen extracellular protease inhibitor forms a specific type of defense-counterdefense mechanism between plants and microbial pathogens. This chain is Cystatin-like cysteine protease inhibitor EPIC1, found in Phytophthora infestans (Potato late blight agent).